Here is a 725-residue protein sequence, read N- to C-terminus: Protein ALEX (725 aa).

7 disordered regions span residues 1 to 93 (MSPS…ARAQ), 177 to 226 (GAIA…PLTD), 256 to 340 (EPPL…PSQP), 396 to 481 (PILT…SPLL), 508 to 528 (PMQV…PLGH), 584 to 624 (LPGL…AASS), and 638 to 675 (ATRS…GRPR). Basic residues predominate over residues 41 to 51 (HLRRKPCHSRH). The span at 260-276 (GSTTTPLSIWTAPQSQV) shows a compositional bias: polar residues. 2 stretches are compositionally biased toward basic and acidic residues: residues 297–307 (QLSEKQPRWKE) and 314–326 (RWKE…REGT). 2 stretches are compositionally biased toward pro residues: residues 423–442 (PSQP…PGQP) and 459–473 (RSLP…PRSP). Low complexity-rich tracts occupy residues 584-598 (LPGL…AAAG) and 643-658 (ATQS…EAAS).

This sequence belongs to the ALEX family. In terms of assembly, interacts with the N-terminal region of the XLas isoforms of guanine nucleotide-binding protein G(s) subunit alpha.

It is found in the cell membrane. The protein resides in the cell projection. The protein localises to the ruffle. Its function is as follows. May inhibit the adenylyl cyclase-stimulating activity of guanine nucleotide-binding protein G(s) subunit alpha which is produced from the same locus in a different open reading frame. This chain is Protein ALEX, found in Mus musculus (Mouse).